Here is a 200-residue protein sequence, read N- to C-terminus: MTNRTASLRRETSESGIELSLDLDGTGASEIHTSVPFYDHLLTAFAKHSLTDLRVRASGDTEIDVHHTVEDVGIVLGQAIRQALGDKAGLSRYGDALVPLDEALVQAVVDLSGRPYLVHAGEPSGFEFHLIGGHFTGSMVRHVFEAISFNAAITTHVTVVGGRDPHHIAEAEFKAFARAFRQAKAYDPLVSGIPSTKGAL.

This sequence belongs to the imidazoleglycerol-phosphate dehydratase family.

The protein localises to the cytoplasm. It carries out the reaction D-erythro-1-(imidazol-4-yl)glycerol 3-phosphate = 3-(imidazol-4-yl)-2-oxopropyl phosphate + H2O. It participates in amino-acid biosynthesis; L-histidine biosynthesis; L-histidine from 5-phospho-alpha-D-ribose 1-diphosphate: step 6/9. This Leifsonia xyli subsp. xyli (strain CTCB07) protein is Imidazoleglycerol-phosphate dehydratase.